A 237-amino-acid chain; its full sequence is tRNA-splicing endonuclease subunit Sen2-1 (237 aa).

Active-site residues include Tyr-148, His-156, and Lys-190.

Belongs to the tRNA-intron endonuclease family. As to quaternary structure, tRNA splicing endonuclease is a heterotetramer composed of SEN2, SEN15, SEN34/LENG5 and SEN54.

The protein localises to the nucleus. The catalysed reaction is pretRNA = a 3'-half-tRNA molecule with a 5'-OH end + a 5'-half-tRNA molecule with a 2',3'-cyclic phosphate end + an intron with a 2',3'-cyclic phosphate and a 5'-hydroxyl terminus.. In terms of biological role, constitutes one of the two catalytic subunit of the tRNA-splicing endonuclease complex, a complex responsible for identification and cleavage of the splice sites in pre-tRNA. It cleaves pre-tRNA at the 5'- and 3'-splice sites to release the intron. The products are an intron and two tRNA half-molecules bearing 2',3'-cyclic phosphate and 5'-OH termini. There are no conserved sequences at the splice sites, but the intron is invariably located at the same site in the gene, placing the splice sites an invariant distance from the constant structural features of the tRNA body. Probably carries the active site for 5'-splice site cleavage. The polypeptide is tRNA-splicing endonuclease subunit Sen2-1 (SEN1) (Arabidopsis thaliana (Mouse-ear cress)).